Consider the following 406-residue polypeptide: Phosphopentomutase (406 aa).

Mn(2+) contacts are provided by Asp-10, Asp-305, His-310, Asp-346, His-347, and His-358.

It belongs to the phosphopentomutase family. Mn(2+) is required as a cofactor.

Its subcellular location is the cytoplasm. It carries out the reaction 2-deoxy-alpha-D-ribose 1-phosphate = 2-deoxy-D-ribose 5-phosphate. The catalysed reaction is alpha-D-ribose 1-phosphate = D-ribose 5-phosphate. It participates in carbohydrate degradation; 2-deoxy-D-ribose 1-phosphate degradation; D-glyceraldehyde 3-phosphate and acetaldehyde from 2-deoxy-alpha-D-ribose 1-phosphate: step 1/2. Functionally, isomerase that catalyzes the conversion of deoxy-ribose 1-phosphate (dRib-1-P) and ribose 1-phosphate (Rib-1-P) to deoxy-ribose 5-phosphate (dRib-5-P) and ribose 5-phosphate (Rib-5-P), respectively. This chain is Phosphopentomutase, found in Methylobacterium radiotolerans (strain ATCC 27329 / DSM 1819 / JCM 2831 / NBRC 15690 / NCIMB 10815 / 0-1).